Reading from the N-terminus, the 178-residue chain is Protein FLOWERING LOCUS T 1 (178 aa).

The protein belongs to the phosphatidylethanolamine-binding protein family. In terms of tissue distribution, expressed in leaves but not in shoot apex.

Functionally, involved in the regulation of vernalization and of flowering time. This is Protein FLOWERING LOCUS T 1 from Brachypodium distachyon (Purple false brome).